The following is a 121-amino-acid chain: Large ribosomal subunit protein uL18 (121 aa).

It belongs to the universal ribosomal protein uL18 family. As to quaternary structure, part of the 50S ribosomal subunit; part of the 5S rRNA/L5/L18/L25 subcomplex. Contacts the 5S and 23S rRNAs.

In terms of biological role, this is one of the proteins that bind and probably mediate the attachment of the 5S RNA into the large ribosomal subunit, where it forms part of the central protuberance. This chain is Large ribosomal subunit protein uL18, found in Thermoanaerobacter pseudethanolicus (strain ATCC 33223 / 39E) (Clostridium thermohydrosulfuricum).